Here is a 951-residue protein sequence, read N- to C-terminus: MLPLPSELQIQAQSIKQRFSELPAPPDLRDEDIAVLALSDFVSDMLLIHPQWLEELHQQPPQPQEWQYYSQWLSQALAGVQDEAALLTALRLFRRRVMVRIAWSQVLQTSGTAETLQQLSTLAESMIIAARDWLYQVCCRELGTPCNRQGVPQPLLILGMGKLGGGELNFSSDIDLIFAYPENGQTQGGRRELDNAQFFTRLGQRLIKALDQHTIDGFVYRVDMRLRPFGDSGPLVLSFAALEDYYQEQGRDWERYAMVKARLMGGADDPYSQELRQMLRPFVFRRYIDFSVIQSLRNMKGMIAREVRRRGLKDNIKLGAGGIREIEFITQVFQLIRGGREPRLQERALLPTLQAVAELGLLPEQQVADLSGSYLFLRRLENLLQAIADEQTQTLPNDPLNQARLAWGMGYADWAAMSTALENHMQAVRVVFDDLIGDETPDIGEDPSHGLYKSLWQDVLEESDLAPLTPHLEEAARRQLLATISGFRHDVDKRTIGPRGREVLDQLMPRLFAEVCSRPDANVALSRLILLLLSIVTRTTYLELLVEYHAALKHVIRLCSASPMVASQLARYPLLLDELLDPQSLYQPLAPSAYRDELRQYLLRVPEDDEEQQLEALRQFKQAQQLRIAAGDITEALPVMKVSDHLTYLAEAIIDAVIQQAWNQMVARYGQPSHLQQSEGRGFAVIGYGKLGGWELGYSSDLDLVFLLDCPLDVMTDGDRSIDGRQFYLRLAQRIMHLFSTRTSSGILYEVDARLRPSGEAGMLVSTIEAFADYQRNEAWTWEHQALVRARIVYGSPKLHQQFDAIRQQILCRHREDPQLQQEVREMREKMRNHLGSKQRDIFDIKADAGGITDIEFIAQYLVLRYAASEPRLTRWSDNVRIFESMAHYDIMSPEEAAALTRAYVTMRDEIHHLALQEQSSKVAADSFIAEREQVAASWHKWLAANDANVS.

Residues 1 to 440 are adenylyl removase; sequence MLPLPSELQI…VFDDLIGDET (440 aa). The tract at residues 449-951 is adenylyl transferase; the sequence is HGLYKSLWQD…WLAANDANVS (503 aa).

The protein belongs to the GlnE family. Mg(2+) serves as cofactor.

The catalysed reaction is [glutamine synthetase]-O(4)-(5'-adenylyl)-L-tyrosine + phosphate = [glutamine synthetase]-L-tyrosine + ADP. It carries out the reaction [glutamine synthetase]-L-tyrosine + ATP = [glutamine synthetase]-O(4)-(5'-adenylyl)-L-tyrosine + diphosphate. Involved in the regulation of glutamine synthetase GlnA, a key enzyme in the process to assimilate ammonia. When cellular nitrogen levels are high, the C-terminal adenylyl transferase (AT) inactivates GlnA by covalent transfer of an adenylyl group from ATP to specific tyrosine residue of GlnA, thus reducing its activity. Conversely, when nitrogen levels are low, the N-terminal adenylyl removase (AR) activates GlnA by removing the adenylyl group by phosphorolysis, increasing its activity. The regulatory region of GlnE binds the signal transduction protein PII (GlnB) which indicates the nitrogen status of the cell. This chain is Bifunctional glutamine synthetase adenylyltransferase/adenylyl-removing enzyme, found in Yersinia pseudotuberculosis serotype O:1b (strain IP 31758).